Here is a 279-residue protein sequence, read N- to C-terminus: Small ribosomal subunit protein uS2 (279 aa).

Residues 232–260 (KVDMEAAGENAPKGAGKKKNTKARMDKAE) form a disordered region.

The protein belongs to the universal ribosomal protein uS2 family.

This Phocaeicola vulgatus (strain ATCC 8482 / DSM 1447 / JCM 5826 / CCUG 4940 / NBRC 14291 / NCTC 11154) (Bacteroides vulgatus) protein is Small ribosomal subunit protein uS2.